Here is a 470-residue protein sequence, read N- to C-terminus: Macrophage metalloelastase (470 aa).

Positions 1-16 (MKFLLILLLQATASGA) are cleaved as a signal peptide. Residues 17–105 (LPLNSSTSLE…DVHHFREMPG (89 aa)) constitute a propeptide, activation peptide. N-linked (GlcNAc...) asparagine glycosylation occurs at asparagine 20. The short motif at 90 to 97 (PRCGVPDV) is the Cysteine switch element. Cysteine 92 is a Zn(2+) binding site. Residues aspartate 124 and aspartate 158 each contribute to the Ca(2+) site. Positions 168 and 170 each coordinate Zn(2+). Residues aspartate 175, glycine 176, glycine 178, and isoleucine 180 each coordinate Ca(2+). Residue histidine 183 coordinates Zn(2+). Residues glycine 190, glycine 192, and aspartate 194 each contribute to the Ca(2+) site. A Zn(2+)-binding site is contributed by histidine 196. Residues aspartate 198, glutamate 199, and glutamate 201 each contribute to the Ca(2+) site. Histidine 218 contacts Zn(2+). The active site involves glutamate 219. Zn(2+)-binding residues include histidine 222 and histidine 228. 4 Hemopexin repeats span residues 279–328 (PALC…WPTL), 329–375 (PSGI…GFPN), 377–425 (VKKI…FQGI), and 426–470 (GPKI…WFGC). An intrachain disulfide couples cysteine 282 to cysteine 470. An N-linked (GlcNAc...) asparagine glycan is attached at asparagine 285. Ca(2+) contacts are provided by aspartate 289, glutamate 333, aspartate 381, and aspartate 430.

This sequence belongs to the peptidase M10A family. Requires Ca(2+) as cofactor. Zn(2+) serves as cofactor. As to expression, found in alveolar macrophages but not in peripheral blood monocytes.

It localises to the secreted. It is found in the extracellular space. The protein resides in the extracellular matrix. It carries out the reaction Hydrolysis of soluble and insoluble elastin. Specific cleavages are also produced at 14-Ala-|-Leu-15 and 16-Tyr-|-Leu-17 in the B chain of insulin.. Its function is as follows. May be involved in tissue injury and remodeling. Has significant elastolytic activity. Can accept large and small amino acids at the P1' site, but has a preference for leucine. Aromatic or hydrophobic residues are preferred at the P1 site, with small hydrophobic residues (preferably alanine) occupying P3. The polypeptide is Macrophage metalloelastase (MMP12) (Homo sapiens (Human)).